A 452-amino-acid chain; its full sequence is Isocitrate dehydrogenase [NADP], mitochondrial (452 aa).

The transit peptide at 1–39 directs the protein to the mitochondrion; that stretch reads MAGYLRVVRSLCRASGSRPAWAPAALTAPTSQEQTRRHY. An N6-acetyllysine mark is found at Lys-45, Lys-48, Lys-67, and Lys-69. Residues Lys-80 and Lys-106 each carry the N6-acetyllysine; alternate modification. N6-succinyllysine; alternate is present on residues Lys-80 and Lys-106. NADP(+)-binding positions include 115–117 and Arg-122; that span reads TIT. Thr-117 contributes to the substrate binding site. Substrate contacts are provided by residues 134–140 and Arg-149; that span reads SPNGTIR. Lys-155 bears the N6-acetyllysine mark. N6-acetyllysine; alternate is present on Lys-166. The residue at position 166 (Lys-166) is an N6-succinyllysine; alternate. Arg-172 lines the substrate pocket. Residues Lys-180 and Lys-193 each carry the N6-acetyllysine; alternate modification. N6-succinyllysine; alternate is present on residues Lys-180 and Lys-193. At Lys-199 the chain carries N6-acetyllysine. Lys-256 carries the N6-acetyllysine; alternate modification. Position 256 is an N6-succinyllysine; alternate (Lys-256). Residues Lys-263, Lys-272, Lys-275, and Lys-280 each carry the N6-acetyllysine modification. Position 282 is an N6-acetyllysine; alternate (Lys-282). Residue Lys-282 is modified to N6-succinyllysine; alternate. Asp-291 serves as a coordination point for Mn(2+). Lys-299 contributes to the NADP(+) binding site. Asp-314 contacts Mn(2+). Residues 349-354 and Asn-367 each bind NADP(+); that span reads GTVTRH. The residue at position 384 (Lys-384) is an N6-acetyllysine; alternate. Lys-384 bears the N6-succinyllysine; alternate mark. Lys-400, Lys-413, and Lys-442 each carry N6-acetyllysine.

It belongs to the isocitrate and isopropylmalate dehydrogenases family. As to quaternary structure, homodimer. Requires Mg(2+) as cofactor. Mn(2+) serves as cofactor. Post-translationally, acetylation at Lys-413 dramatically reduces catalytic activity. Deacetylated by SIRT3.

It is found in the mitochondrion. It catalyses the reaction D-threo-isocitrate + NADP(+) = 2-oxoglutarate + CO2 + NADPH. Plays a role in intermediary metabolism and energy production. It may tightly associate or interact with the pyruvate dehydrogenase complex. The protein is Isocitrate dehydrogenase [NADP], mitochondrial (IDH2) of Macaca fascicularis (Crab-eating macaque).